Consider the following 72-residue polypeptide: Translation initiation factor IF-1 (72 aa).

One can recognise an S1-like domain in the interval 1-72; that stretch reads MPKEEVLEFP…TKGRITYRFK (72 aa).

It belongs to the IF-1 family. Component of the 30S ribosomal translation pre-initiation complex which assembles on the 30S ribosome in the order IF-2 and IF-3, IF-1 and N-formylmethionyl-tRNA(fMet); mRNA recruitment can occur at any time during PIC assembly.

The protein localises to the cytoplasm. Its function is as follows. One of the essential components for the initiation of protein synthesis. Stabilizes the binding of IF-2 and IF-3 on the 30S subunit to which N-formylmethionyl-tRNA(fMet) subsequently binds. Helps modulate mRNA selection, yielding the 30S pre-initiation complex (PIC). Upon addition of the 50S ribosomal subunit IF-1, IF-2 and IF-3 are released leaving the mature 70S translation initiation complex. The polypeptide is Translation initiation factor IF-1 (Chelativorans sp. (strain BNC1)).